Consider the following 566-residue polypeptide: Cyclin-dependent kinase-like 2 (566 aa).

The region spanning 4–287 is the Protein kinase domain; that stretch reads YENLGLVGEG…CAELLHHDFF (284 aa). Residues 10–18 and lysine 33 contribute to the ATP site; that span reads VGEGSYGMV. Positions 45–51 match the [NKR]KIAxRE motif; it reads KKIAMRE. Residue aspartate 126 is the Proton acceptor of the active site. Disordered regions lie at residues 307-334 and 545-566; these read DARN…GEER and QVSG…EHQH. The segment covering 320–334 has biased composition (basic and acidic residues); that stretch reads RKKEKEKDDSLGEER.

Belongs to the protein kinase superfamily. CMGC Ser/Thr protein kinase family. CDC2/CDKX subfamily.

Its subcellular location is the cytoplasm. The protein localises to the nucleus. It catalyses the reaction L-seryl-[protein] + ATP = O-phospho-L-seryl-[protein] + ADP + H(+). It carries out the reaction L-threonyl-[protein] + ATP = O-phospho-L-threonyl-[protein] + ADP + H(+). This chain is Cyclin-dependent kinase-like 2, found in Oryctolagus cuniculus (Rabbit).